The sequence spans 155 residues: Ribonuclease H (155 aa).

The 142-residue stretch at 1-142 (MLKQVEIFTD…CDELARAAAS (142 aa)) folds into the RNase H type-1 domain. Asp10, Glu48, Asp70, and Asp134 together coordinate Mg(2+).

This sequence belongs to the RNase H family. As to quaternary structure, monomer. Mg(2+) serves as cofactor.

It is found in the cytoplasm. It catalyses the reaction Endonucleolytic cleavage to 5'-phosphomonoester.. Endonuclease that specifically degrades the RNA of RNA-DNA hybrids. This is Ribonuclease H from Klebsiella pneumoniae subsp. pneumoniae (strain ATCC 700721 / MGH 78578).